The following is a 431-amino-acid chain: Phosphoribosylamine--glycine ligase (431 aa).

The ATP-grasp domain maps to 109–316; that stretch reads KDFLARHGIP…LVDLLEAAID (208 aa). 135–196 contributes to the ATP binding site; sequence VREKGTPIVV…EEFLDGEEAS (62 aa). Positions 286 and 288 each coordinate Mg(2+).

This sequence belongs to the GARS family. Mg(2+) is required as a cofactor. The cofactor is Mn(2+).

It catalyses the reaction 5-phospho-beta-D-ribosylamine + glycine + ATP = N(1)-(5-phospho-beta-D-ribosyl)glycinamide + ADP + phosphate + H(+). It participates in purine metabolism; IMP biosynthesis via de novo pathway; N(1)-(5-phospho-D-ribosyl)glycinamide from 5-phospho-alpha-D-ribose 1-diphosphate: step 2/2. The chain is Phosphoribosylamine--glycine ligase from Xanthomonas axonopodis pv. citri (strain 306).